A 695-amino-acid polypeptide reads, in one-letter code: Translation initiation factor IF-2 (695 aa).

Positions 60–92 are disordered; it reads KKSASSKKKTEKEVEEEEIETPKKKKKQEEKIP. The tr-type G domain maps to 184–358; that stretch reads QRPPVVTVMG…EMSEIKCIPT (175 aa). The interval 193-200 is G1; it reads GHVDHGKT. A GTP-binding site is contributed by 193–200; sequence GHVDHGKT. Residues 218-222 are G2; that stretch reads GITQS. The interval 239–242 is G3; that stretch reads DTPG. Residues 239-243 and 293-296 contribute to the GTP site; these read DTPGH and NKID. Positions 293-296 are G4; that stretch reads NKID. Residues 330-332 form a G5 region; it reads SAK.

Belongs to the TRAFAC class translation factor GTPase superfamily. Classic translation factor GTPase family. IF-2 subfamily.

Its subcellular location is the cytoplasm. Functionally, one of the essential components for the initiation of protein synthesis. Protects formylmethionyl-tRNA from spontaneous hydrolysis and promotes its binding to the 30S ribosomal subunits. Also involved in the hydrolysis of GTP during the formation of the 70S ribosomal complex. This is Translation initiation factor IF-2 from Kosmotoga olearia (strain ATCC BAA-1733 / DSM 21960 / TBF 19.5.1).